Here is a 393-residue protein sequence, read N- to C-terminus: UDP-N-acetylglucosamine--N-acetylmuramyl-(pentapeptide) pyrophosphoryl-undecaprenol N-acetylglucosamine transferase (393 aa).

UDP-N-acetyl-alpha-D-glucosamine contacts are provided by residues 15–17 (TAG), Asn-129, Arg-171, Ser-211, and Gln-322.

It belongs to the glycosyltransferase 28 family. MurG subfamily.

It is found in the cell membrane. It catalyses the reaction di-trans,octa-cis-undecaprenyl diphospho-N-acetyl-alpha-D-muramoyl-L-alanyl-D-glutamyl-meso-2,6-diaminopimeloyl-D-alanyl-D-alanine + UDP-N-acetyl-alpha-D-glucosamine = di-trans,octa-cis-undecaprenyl diphospho-[N-acetyl-alpha-D-glucosaminyl-(1-&gt;4)]-N-acetyl-alpha-D-muramoyl-L-alanyl-D-glutamyl-meso-2,6-diaminopimeloyl-D-alanyl-D-alanine + UDP + H(+). It participates in cell wall biogenesis; peptidoglycan biosynthesis. Its function is as follows. Cell wall formation. Catalyzes the transfer of a GlcNAc subunit on undecaprenyl-pyrophosphoryl-MurNAc-pentapeptide (lipid intermediate I) to form undecaprenyl-pyrophosphoryl-MurNAc-(pentapeptide)GlcNAc (lipid intermediate II). The polypeptide is UDP-N-acetylglucosamine--N-acetylmuramyl-(pentapeptide) pyrophosphoryl-undecaprenol N-acetylglucosamine transferase (Bifidobacterium longum (strain DJO10A)).